The sequence spans 382 residues: Threonine synthase (382 aa).

Lys93 bears the N6-(pyridoxal phosphate)lysine mark. Residues Asn119, 219–223, and Thr347 contribute to the pyridoxal 5'-phosphate site; that span reads GNAGN.

This sequence belongs to the threonine synthase family. It depends on pyridoxal 5'-phosphate as a cofactor.

It carries out the reaction O-phospho-L-homoserine + H2O = L-threonine + phosphate. Its pathway is amino-acid biosynthesis; L-threonine biosynthesis; L-threonine from L-aspartate: step 5/5. Functionally, catalyzes the gamma-elimination of phosphate from L-phosphohomoserine and the beta-addition of water to produce L-threonine. The chain is Threonine synthase (thrC) from Synechocystis sp. (strain ATCC 27184 / PCC 6803 / Kazusa).